The following is a 330-amino-acid chain: Phosphate acyltransferase (330 aa).

This sequence belongs to the PlsX family. In terms of assembly, homodimer. Probably interacts with PlsY.

The protein localises to the cytoplasm. It catalyses the reaction a fatty acyl-[ACP] + phosphate = an acyl phosphate + holo-[ACP]. Its pathway is lipid metabolism; phospholipid metabolism. Its function is as follows. Catalyzes the reversible formation of acyl-phosphate (acyl-PO(4)) from acyl-[acyl-carrier-protein] (acyl-ACP). This enzyme utilizes acyl-ACP as fatty acyl donor, but not acyl-CoA. This chain is Phosphate acyltransferase, found in Streptococcus agalactiae serotype III (strain NEM316).